The primary structure comprises 474 residues: MSMKNLSLISACLLLGACGSTPAPLDSGLAAPSQWRYLAAGRSDASDIRQWWKAFGAPELDSLLQRALLNSQDLGAAVARVRQAQASAVIAGAPLLPELNATLGASRQKLLRDSGYSGTDATSDNDAVDSFSAGLSASYEVDFWGGRQAAYRSALESLKASEYDRATVELTLLSGVANSYLQVLALREQQRIARLNLDNAEHVLRLVETRHAAGSATALEVAQQSSLVASQRKQLPLLEQQAHEALITLATLIGEPVQALQVAERPFDSLRWPETGAGLPSELLSRRPDIANAEAQLAAAQADVQVARAALFPKLTLSASLSSGANRAADTFRNPYYNLGANLLAPIFNHGRLRAERDRSLARQEELLETYRKAILTAFADTERSLNSIDGLDRQLHWQQQELEQAQRAFDLSDSRYQAGAETLLTVLETQRTLYAAQDAAVQLRLARLQASVGLYKALGGGWQSDRQGLARKD.

Positions 1 to 17 (MSMKNLSLISACLLLGA) are cleaved as a signal peptide. Residue C18 is the site of N-palmitoyl cysteine attachment. C18 carries S-diacylglycerol cysteine lipidation.

This sequence belongs to the outer membrane factor (OMF) (TC 1.B.17) family. Part of the tripartite efflux system PvdRT-OpmQ, which is composed of an inner membrane component with both ATPase and permease domains, PvdT, a periplasmic membrane fusion protein, PvdR, and an outer membrane component, OpmQ.

The protein resides in the cell outer membrane. In terms of biological role, part of the tripartite efflux system PvdRT-OpmQ required for the secretion into the extracellular milieu of the siderophore pyoverdine (PVD), which is involved in iron acquisition. The system is responsible for export of newly synthesized PVD after the final steps of biosynthesis have taken place in the periplasm. It is also responsible for recycling of PVD after internalization of ferri-PVD into the periplasm by the outer-membrane receptor FpvA and release of iron from PVD, thus making PVD available for new cycles of iron uptake. In addition, can expel unwanted metals complexed with PVD from the periplasm into the extracellular medium. In Pseudomonas aeruginosa (strain ATCC 15692 / DSM 22644 / CIP 104116 / JCM 14847 / LMG 12228 / 1C / PRS 101 / PAO1), this protein is Pyoverdine export outer membrane protein OpmQ.